Consider the following 571-residue polypeptide: E3 ubiquitin-protein ligase ipaH3 (571 aa).

Residues 1–260 (MSIMLPINNN…SQQTAQPDYH (260 aa)) form an interaction with target proteins region. LRR repeat units follow at residues 58-81 (INQFSELQLNRLNLSSLPDNLPPQ), 83-99 (TVLEITQNALISLPELP), 100-119 (ASLEYLDACDNRLSTLPELP), 120-144 (ASLKHLDVDNNQLTMLPELPALLEY), 146-159 (NADNNQLTMLPELP), 160-184 (TSLEVLSVRNNQLTFLPELPESLEA), 186-202 (DVSTNLLESLPAVPVRN), 205-229 (SEETEIFFRCRENRITHIPENILSL), and 232-260 (TCTIILEDNPLSSRIRESLSQQTAQPDYH). The segment at 269–278 (SDGQQNTLHR) is linker. The 293-residue stretch at 279–571 (PLADAVTAWF…SENGSQLHHS (293 aa)) folds into the NEL domain. The segment at 279–571 (PLADAVTAWF…SENGSQLHHS (293 aa)) is E3 ubiquitin-protein ligase catalytic domain. The Glycyl thioester intermediate role is filled by Cys363.

Belongs to the LRR-containing bacterial E3 ligase family. Post-translationally, ubiquitinated in the presence of host E1 ubiquitin-activating enzyme, E2 ubiquitin-conjugating enzyme UBE2D3 and ubiquitin.

It is found in the secreted. It localises to the host cytoplasm. It carries out the reaction S-ubiquitinyl-[E2 ubiquitin-conjugating enzyme]-L-cysteine + [acceptor protein]-L-lysine = [E2 ubiquitin-conjugating enzyme]-L-cysteine + N(6)-ubiquitinyl-[acceptor protein]-L-lysine.. Functionally, effector proteins function to alter host cell physiology and promote bacterial survival in host tissues. This protein is an E3 ubiquitin ligase that interferes with host's ubiquitination pathway. Synthesizes a 'Lys-48'-linked ubiquitin chain, which requires non-covalent binding between ubiquitin and the host ubiquitin-conjugating enzyme UBE2D1. In Shigella flexneri, this protein is E3 ubiquitin-protein ligase ipaH3 (ipaH3).